A 715-amino-acid polypeptide reads, in one-letter code: Forkhead box protein P2 (715 aa).

A compositionally biased stretch (polar residues) spans methionine 1 to aspartate 28. Disordered regions lie at residues methionine 1 to threonine 46 and aspartate 281 to serine 339. Over residues threonine 292–serine 305 the composition is skewed to low complexity. The span at alanine 326–glycine 337 shows a compositional bias: basic and acidic residues. The segment at glycine 346–histidine 371 adopts a C2H2-type zinc-finger fold. The tract at residues valine 388 to leucine 409 is leucine-zipper. Positions proline 422–valine 426 are CTBP1-binding. The segment covering threonine 438–glutamine 459 has biased composition (low complexity). The disordered stretch occupies residues threonine 438 to threonine 465. Residues arginine 504–leucine 594 constitute a DNA-binding region (fork-head). 2 disordered regions span residues leucine 649–isoleucine 668 and valine 678–glutamate 715. The span at leucine 699–glutamate 715 shows a compositional bias: acidic residues.

Forms homodimers and heterodimers with FOXP1 and FOXP4. Dimerization is required for DNA-binding. Interacts with CTBP1. Interacts with FOXP1. Isoform 1 and isoform 3 interact with TBR1. Interacts with ZMYM2. As to expression, isoform 1 and isoform 6 are expressed in adult and fetal brain, caudate nucleus and lung.

The protein resides in the nucleus. Transcriptional repressor that may play a role in the specification and differentiation of lung epithelium. May also play a role in developing neural, gastrointestinal and cardiovascular tissues. Can act with CTBP1 to synergistically repress transcription but CTPBP1 is not essential. Plays a role in synapse formation by regulating SRPX2 levels. Involved in neural mechanisms mediating the development of speech and language. The chain is Forkhead box protein P2 (FOXP2) from Homo sapiens (Human).